The sequence spans 450 residues: Phosphoglucosamine mutase (450 aa).

Ser102 (phosphoserine intermediate) is an active-site residue. Mg(2+) is bound by residues Ser102, Asp243, Asp245, and Asp247. Phosphoserine is present on Ser102.

The protein belongs to the phosphohexose mutase family. The cofactor is Mg(2+). Activated by phosphorylation.

The enzyme catalyses alpha-D-glucosamine 1-phosphate = D-glucosamine 6-phosphate. Functionally, catalyzes the conversion of glucosamine-6-phosphate to glucosamine-1-phosphate. This is Phosphoglucosamine mutase from Rhizobium rhizogenes (strain K84 / ATCC BAA-868) (Agrobacterium radiobacter).